The sequence spans 860 residues: MSQHVGHGRRPRTPGPPVRSIRPFKSSEQYLEAMKEDLAEWLRDLYGLDIDADNFLRVLETGLVLCRHANTVTEAALAFLAEAPERAQKIPMPQAGVFCNGAAQPGTFQARDNISNFIQWCRKEMGIQEVLMFETEDLVLRKNVKSVVLCLLELGRRAWRFGVAAPALVHLEEEIDEELRRDLALPSPDPPPPIPPARRPCHFHNLDQMVQSLVSHCTCPVQFSMVKISEGKYRVGDSNTLIFIRILRSHVMVRVGGGWDTLGHYLDKHDPCRCTSLSHKPGSFLKPPGPPVQHEVKVQDGPSQPQPTMTISRSQSPLPPVDWKTYTSSSRKLRPPTPSSPGLRSEPPVRARTLREDPLPRSQEKPTPSQRMSSPGPQFSSTCRGPDLQSTLSGKRANRCPGEPPRGRTPTLWVHKEAGSRGTHTKAPTPQRLQIPEATSKRTSARGPSPPPRSSSLASPHMIWVLHQGASPQLSEPMTVHSSSPGKGLTKIPIRLSPARPPTPGRSSLGTEGEYSTGRGSISSRALEGNLDRSTHGHHSVEASGDHQTDIQTTSETEDPRSLGTQKWKERHTSLALGRRREQALYDNLKEEVVANMKLLEVGTAYTQGTRSQAIPRSGVYVPSLGGRWPEPGGPYDKVIRELVQGPPPLLKVDLKAWKVGSECLPRPIVDPGSPKEKLGSRETGTRIKASLNAEDTTVRTVSPARGQGCSTPPVSANLEAPTRSCSDPSSDKASVCLGKGKRTLRKPQKIPSIYKLKLRPRIRPRRDHRPEKRPSRIPKPLPYSCLVLARTAPGSRLLKATLGGKGGVPCQVNGTGKKEEEKKKGGSNISLESSIQPAESQEPLKLGGTPLSPEEESWV.

The span at Met1–Arg12 shows a compositional bias: basic residues. The interval Met1–Arg22 is disordered. The region spanning Glu32 to Trp159 is the Calponin-homology (CH) domain. One can recognise a GAR domain in the interval Cys201 to Arg273. Disordered stretches follow at residues Pro281–Ser459, Gln473–Ser574, Thr697–Arg743, Lys758–Pro781, and Ala801–Val860. The segment covering Gly301 to Ser316 has biased composition (polar residues). Positions Pro347–Glu364 are enriched in basic and acidic residues. 2 stretches are compositionally biased toward polar residues: residues Lys365 to Ser393 and Gln473 to Pro485. Positions Gln431–Val860 are interaction with ADORA2A and GNAS. The segment covering Asn530 to Thr549 has biased composition (basic and acidic residues). A compositionally biased stretch (polar residues) spans Arg724 to Lys733. Residues Lys758–Asp768 are compositionally biased toward basic residues. The segment covering Ser828–Glu840 has biased composition (polar residues).

The protein belongs to the GAS2 family. As to quaternary structure, interacts with ADORA2A (via its cytoplasmic C-terminal domain). Interacts with GNAS, GNAL, GNAQ, and GNA13. Interacts with MAPRE1. As to expression, expressed in tracheal epithelial cells (at protein level).

The protein localises to the cytoplasm. It localises to the cytoskeleton. It is found in the cell membrane. The protein resides in the stress fiber. Its subcellular location is the cilium basal body. Its function is as follows. Involved in the cross-linking of microtubules and microfilaments. Regulates microtubule dynamics and stability by interacting with microtubule plus-end tracking proteins, such as MAPRE1, to regulate microtubule growth along actin stress fibers. Enhances ADORA2-mediated adenylyl cyclase activation by acting as a scaffold to recruit trimeric G-protein complexes to ADORA2A. Regulates ciliary orientation and performance in cells located in the airway. In Mus musculus (Mouse), this protein is GAS2-like protein 2 (Gas2l2).